The sequence spans 503 residues: AMP phosphorylase (503 aa).

AMP is bound by residues Gly168, 194–199 (SRAITS), and Thr203. Asp256 acts as the Proton donor in catalysis. AMP is bound by residues Ser264 and Lys288.

It belongs to the thymidine/pyrimidine-nucleoside phosphorylase family. Type 2 subfamily.

It catalyses the reaction AMP + phosphate = alpha-D-ribose 1,5-bisphosphate + adenine. The catalysed reaction is CMP + phosphate = cytosine + alpha-D-ribose 1,5-bisphosphate. It carries out the reaction UMP + phosphate = alpha-D-ribose 1,5-bisphosphate + uracil. Its function is as follows. Catalyzes the conversion of AMP and phosphate to adenine and ribose 1,5-bisphosphate (R15P). Exhibits phosphorylase activity toward CMP and UMP in addition to AMP. Functions in an archaeal AMP degradation pathway, together with R15P isomerase and RubisCO. In Thermococcus sibiricus (strain DSM 12597 / MM 739), this protein is AMP phosphorylase.